The primary structure comprises 484 residues: Hemogen (484 aa).

Positions 1–25 (MDLGKDQSHLKHHQTPDPHQEENHS) are enriched in basic and acidic residues. Disordered regions lie at residues 1-32 (MDLG…IGTW) and 44-91 (KAEV…PQPQ). Positions 7–87 (QSHLKHHQTP…RQQNTELKVE (81 aa)) are necessary for nuclear localization. The span at 61-79 (KKRKQQRTGKGNRRGRKRQ) shows a compositional bias: basic residues. A phosphoserine mark is found at serine 123, serine 159, serine 181, serine 188, and serine 201. Threonine 246 bears the Phosphothreonine mark. Disordered stretches follow at residues 265 to 290 (DVPK…TDQG), 306 to 369 (EPKD…YSPE), and 386 to 471 (QETS…ILNE). The segment covering 306–320 (EPKDLSTKTHQESAE) has biased composition (basic and acidic residues). A phosphoserine mark is found at serine 349 and serine 353. Threonine 360 is modified (phosphothreonine). Residues serine 363 and serine 367 each carry the phosphoserine modification. Basic and acidic residues-rich tracts occupy residues 413-428 (YKNK…EPHQ), 438-447 (PKAHQEDAKD), and 454-463 (EMKEKPKEEP).

Expressed in hematopoietic precursor cells, thyroid and spermatids (at protein level). Expressed in bone marrow, testis, thymus. Expressed in prostate cancer and ovarian cancer. Also expressed in thymus and thyroid tumors, non-Hodgkin lymphoma, various leukemia cell lines, peripheral blood mononuclear cells (PBMCs) and bone marrow mononuclear cells (BMMCs) of patients with leukemia.

It localises to the nucleus. In terms of biological role, regulates the proliferation and differentiation of hematopoietic cells. Overexpression block the TPA-induced megakaryocytic differentiation in the K562 cell model. May also prevent cell apoptosis through the activation of the nuclear factor-kappa B (NF-kB). The sequence is that of Hemogen (HEMGN) from Homo sapiens (Human).